Consider the following 460-residue polypeptide: 4-O-methyl-glucuronoyl methylesterase (460 aa).

The N-terminal stretch at 1 to 17 (MASRFFALLLLAIPIQA) is a signal peptide. A Pyrrolidone carboxylic acid modification is found at Q18. Residues 18 to 53 (QSPVWGQCGGIGWSGPTTCVGGATCVSYNPYYSQCI) form the CBM1 domain. 3 cysteine pairs are disulfide-bonded: C96–C131, C277–C412, and C309–C384. A GXSYXG catalytic site motif motif is present at residues 276 to 281 (GCSRNG). S278 (nucleophile) is an active-site residue. Residues K282, Q324, E332, and W375 each contribute to the substrate site. Catalysis depends on H411, which acts as the Proton donor/acceptor. The N-linked (GlcNAc...) asparagine glycan is linked to N447.

The protein belongs to the carbohydrate esterase 15 (CE15) family.

The protein localises to the secreted. The catalysed reaction is a 4-O-methyl-alpha-D-glucuronosyl ester derivative + H2O = 4-O-methyl-alpha-D-glucuronate derivative + an alcohol + H(+). Functionally, glucuronoyl esterase which may play a significant role in biomass degradation, as it is considered to disconnect hemicellulose from lignin through the hydrolysis of the ester bond between 4-O-methyl-D-glucuronic acid residues of glucuronoxylans and aromatic alcohols of lignin. Does not hydrolyze substrates of other carbohydrate esterases such as acetylxylan esterase, acetyl esterase and feruloyl esterase. This Hypocrea jecorina (strain QM6a) (Trichoderma reesei) protein is 4-O-methyl-glucuronoyl methylesterase.